The following is a 537-amino-acid chain: Phosphoenolpyruvate carboxykinase (ATP) (537 aa).

3 residues coordinate substrate: R61, Y195, and K201. Residues K201, H220, and 236–244 (GLSGTGKTT) contribute to the ATP site. 2 residues coordinate Mn(2+): K201 and H220. A Mn(2+)-binding site is contributed by D257. ATP is bound by residues E285, R323, and T448. R323 contacts substrate.

The protein belongs to the phosphoenolpyruvate carboxykinase (ATP) family. Mn(2+) serves as cofactor.

Its subcellular location is the cytoplasm. It carries out the reaction oxaloacetate + ATP = phosphoenolpyruvate + ADP + CO2. The protein operates within carbohydrate biosynthesis; gluconeogenesis. Functionally, involved in the gluconeogenesis. Catalyzes the conversion of oxaloacetate (OAA) to phosphoenolpyruvate (PEP) through direct phosphoryl transfer between the nucleoside triphosphate and OAA. The sequence is that of Phosphoenolpyruvate carboxykinase (ATP) from Rhodopseudomonas palustris (strain BisA53).